We begin with the raw amino-acid sequence, 338 residues long: MKLEPQIMAIVIGTTDISLIPGISVAGASPELTHYTPALDVEYLLLGMPKTMEVIPVTPEGIPTPALVTRAVAGEVAKLVVNAGSRITPKVPYVDLGGEPGRDFRRGPALSCEAARNILERGRALGCELGRLGCIYIGESIPGGTTTAMAILVAMGYDAWGRTSSASPNNPKELKIAVVKEGLRRVSAPLKPLEAVCEMGDPVHLAVAAIALGVSECGGVPVLAGGTQMAAAAALYKGLGGDLAKLHVATTRWIAEDKSADFMGLMEIVGVKNVYIAGVSFAGSKYEGLRAYERGAVKEGVAMGGALFYALSKGKDVLRLVEAEYERLLSAGVAGNVN.

This sequence belongs to the UPF0284 family.

The protein is UPF0284 protein PAE0372 of Pyrobaculum aerophilum (strain ATCC 51768 / DSM 7523 / JCM 9630 / CIP 104966 / NBRC 100827 / IM2).